The primary structure comprises 694 residues: Elongation factor G (694 aa).

The tr-type G domain occupies 9–288 (DAIRNIGIMA…VIVKWLPSPL (280 aa)). Residues 18–25 (AHIDAGKT), 82–86 (DTPGH), and 136–139 (NKMD) contribute to the GTP site.

The protein belongs to the TRAFAC class translation factor GTPase superfamily. Classic translation factor GTPase family. EF-G/EF-2 subfamily.

Its subcellular location is the cytoplasm. Functionally, catalyzes the GTP-dependent ribosomal translocation step during translation elongation. During this step, the ribosome changes from the pre-translocational (PRE) to the post-translocational (POST) state as the newly formed A-site-bound peptidyl-tRNA and P-site-bound deacylated tRNA move to the P and E sites, respectively. Catalyzes the coordinated movement of the two tRNA molecules, the mRNA and conformational changes in the ribosome. This Chlamydia muridarum (strain MoPn / Nigg) protein is Elongation factor G (fusA).